A 389-amino-acid polypeptide reads, in one-letter code: 23S rRNA (uracil(747)-C(5))-methyltransferase RlmC (389 aa).

The [4Fe-4S] cluster site is built by cysteine 5, cysteine 13, cysteine 16, and cysteine 94. S-adenosyl-L-methionine contacts are provided by glutamine 219, phenylalanine 248, glutamate 275, and asparagine 321. The Nucleophile role is filled by cysteine 348.

Belongs to the class I-like SAM-binding methyltransferase superfamily. RNA M5U methyltransferase family. RlmC subfamily.

It catalyses the reaction uridine(747) in 23S rRNA + S-adenosyl-L-methionine = 5-methyluridine(747) in 23S rRNA + S-adenosyl-L-homocysteine + H(+). Its function is as follows. Catalyzes the formation of 5-methyl-uridine at position 747 (m5U747) in 23S rRNA. This chain is 23S rRNA (uracil(747)-C(5))-methyltransferase RlmC, found in Mannheimia succiniciproducens (strain KCTC 0769BP / MBEL55E).